Here is a 307-residue protein sequence, read N- to C-terminus: tRNA(Met) cytidine acetate ligase (307 aa).

Residues 12–25 (VVEY…HIYQ), Gly106, Asn163, and Arg188 each bind ATP.

It belongs to the TmcAL family.

It localises to the cytoplasm. It catalyses the reaction cytidine(34) in elongator tRNA(Met) + acetate + ATP = N(4)-acetylcytidine(34) in elongator tRNA(Met) + AMP + diphosphate. Functionally, catalyzes the formation of N(4)-acetylcytidine (ac(4)C) at the wobble position of elongator tRNA(Met), using acetate and ATP as substrates. First activates an acetate ion to form acetyladenylate (Ac-AMP) and then transfers the acetyl group to tRNA to form ac(4)C34. This chain is tRNA(Met) cytidine acetate ligase, found in Mycoplasmopsis synoviae (strain 53) (Mycoplasma synoviae).